We begin with the raw amino-acid sequence, 217 residues long: Protein matrimony (217 aa).

Residues 39–41 carry the POLO box domain (PBD)-binding motif; that stretch reads STP. S63 and S66 each carry phosphoserine. A disordered region spans residues 83–106; sequence KQQQQQQHQHCHRTQLKPPPFVLP. In terms of domain architecture, SAM spans 157 to 217; that stretch reads NHAANVEQIL…NRIMDVLHTL (61 aa).

Interacts with polo. Interacts with cort. Probably ubiquitinated: degraded during the oocyte-to-embryo transition by the anaphase promoting complex/cyclosome (APC/C) containing cort protein.

It is found in the nucleus. The protein localises to the chromosome. Its function is as follows. Polo kinase inhibitor required to maintain G2 arrest in the meiotic cell cycle in females. Holds heterochromatically paired homologs together from the end of pachytene until metaphase I. Haploinsufficient locus for homologous achiasmate segregation and may be required for the maintenance of heterochromatic pairings. This Drosophila melanogaster (Fruit fly) protein is Protein matrimony.